A 1004-amino-acid polypeptide reads, in one-letter code: Sodium/potassium-transporting ATPase subunit alpha-B (1004 aa).

2 helical membrane passes run 76–96 (LFGG…LAYG) and 110–126 (NLYL…VTGI). The interval 197–216 (SSLTGESEPQARSPEFTNDN) is disordered. 2 consecutive transmembrane segments (helical) span residues 272-294 (FIHI…AFVL) and 301-329 (AVVF…TLTA). The active-site 4-aspartylphosphate intermediate is Asp357. Lys489 lines the ATP pocket. Mg(2+)-binding residues include Asp698 and Asp702. 4 helical membrane passes run 768–791 (ISPF…ILCI), 828–855 (ERLI…VIMA), 897–918 (SSCH…LIIS), and 934–959 (ILNF…DKGL).

Belongs to the cation transport ATPase (P-type) (TC 3.A.3) family. Type IIC subfamily. In terms of assembly, the sodium/potassium-transporting ATPase is composed of a catalytic alpha subunit, an auxiliary non-catalytic beta subunit and an additional regulatory subunit.

It is found in the cell membrane. It carries out the reaction K(+)(out) + Na(+)(in) + ATP + H2O = K(+)(in) + Na(+)(out) + ADP + phosphate + H(+). This is the catalytic component of the active enzyme, which catalyzes the hydrolysis of ATP coupled with the exchange of sodium and potassium ions across the plasma membrane. This action creates the electrochemical gradient of sodium and potassium ions, providing the energy for active transport of various nutrients. This is Sodium/potassium-transporting ATPase subunit alpha-B from Artemia franciscana (Brine shrimp).